The sequence spans 109 residues: Large ribosomal subunit protein eL30A (109 aa).

The protein belongs to the eukaryotic ribosomal protein eL30 family. In terms of assembly, component of the large ribosomal subunit (LSU). Mature yeast ribosomes consist of a small (40S) and a large (60S) subunit. The 40S small subunit contains 1 molecule of ribosomal RNA (18S rRNA) and at least 33 different proteins. The large 60S subunit contains 3 rRNA molecules (25S, 5.8S and 5S rRNA) and at least 46 different proteins.

The protein resides in the cytoplasm. Its function is as follows. Component of the ribosome, a large ribonucleoprotein complex responsible for the synthesis of proteins in the cell. The small ribosomal subunit (SSU) binds messenger RNAs (mRNAs) and translates the encoded message by selecting cognate aminoacyl-transfer RNA (tRNA) molecules. The large subunit (LSU) contains the ribosomal catalytic site termed the peptidyl transferase center (PTC), which catalyzes the formation of peptide bonds, thereby polymerizing the amino acids delivered by tRNAs into a polypeptide chain. The nascent polypeptides leave the ribosome through a tunnel in the LSU and interact with protein factors that function in enzymatic processing, targeting, and the membrane insertion of nascent chains at the exit of the ribosomal tunnel. This Schizosaccharomyces pombe (strain 972 / ATCC 24843) (Fission yeast) protein is Large ribosomal subunit protein eL30A (rpl3001).